The following is a 272-amino-acid chain: Glycosylphosphatidylinositol anchor biosynthesis protein 11 (272 aa).

Positions 21-31 (QSTSTTKSTPG) are enriched in polar residues. Residues 21–48 (QSTSTTKSTPGSQATESSTTTAGSSSSL) are disordered. Residues 32–48 (SQATESSTTTAGSSSSL) are compositionally biased toward low complexity. A run of 5 helical transmembrane segments spans residues 91 to 111 (VMLN…LLCL), 145 to 165 (LLAS…MVLF), 177 to 197 (FLCA…VHGV), 215 to 235 (TFGG…PIPL), and 248 to 268 (ILCG…TLFW).

Belongs to the PIGF family.

The protein resides in the endoplasmic reticulum membrane. Its pathway is glycolipid biosynthesis; glycosylphosphatidylinositol-anchor biosynthesis. Functionally, acts in the GPI biosynthetic pathway between GlcNAc-PI synthesis and GPI transfer to protein. In Neurospora crassa (strain ATCC 24698 / 74-OR23-1A / CBS 708.71 / DSM 1257 / FGSC 987), this protein is Glycosylphosphatidylinositol anchor biosynthesis protein 11 (gpi-11).